A 440-amino-acid chain; its full sequence is Probable exopolygalacturonase C (440 aa).

A signal peptide spans 1–21; that stretch reads MLITNPALLGILASLAPLALG. N-linked (GlcNAc...) asparagine glycosylation is found at N24, N84, N151, and N219. PbH1 repeat units follow at residues 217–238 and 240–261; these read GTNISITDSVMYNGDDAIAVNT and SHNIVFARNTIGYQSHGMSIGS. The active-site Proton donor is D231. H255 is a catalytic residue. N271 carries an N-linked (GlcNAc...) asparagine glycan. The stretch at 272–293 is one PbH1 3 repeat; sequence ITNLRFEDVTVIDALYAARFKS. N-linked (GlcNAc...) asparagine glycans are attached at residues N313 and N350. A disulfide bridge links C389 with C395. N434 carries an N-linked (GlcNAc...) asparagine glycan.

It belongs to the glycosyl hydrolase 28 family.

It localises to the secreted. It catalyses the reaction [(1-&gt;4)-alpha-D-galacturonosyl](n) + H2O = alpha-D-galacturonate + [(1-&gt;4)-alpha-D-galacturonosyl](n-1). Specific in hydrolyzing the terminal glycosidic bond of polygalacturonic acid and oligogalacturonates. In Neosartorya fischeri (strain ATCC 1020 / DSM 3700 / CBS 544.65 / FGSC A1164 / JCM 1740 / NRRL 181 / WB 181) (Aspergillus fischerianus), this protein is Probable exopolygalacturonase C (pgxC).